The following is a 109-amino-acid chain: Large ribosomal subunit protein uL22 (109 aa).

The protein belongs to the universal ribosomal protein uL22 family. As to quaternary structure, part of the 50S ribosomal subunit.

This protein binds specifically to 23S rRNA; its binding is stimulated by other ribosomal proteins, e.g. L4, L17, and L20. It is important during the early stages of 50S assembly. It makes multiple contacts with different domains of the 23S rRNA in the assembled 50S subunit and ribosome. In terms of biological role, the globular domain of the protein is located near the polypeptide exit tunnel on the outside of the subunit, while an extended beta-hairpin is found that lines the wall of the exit tunnel in the center of the 70S ribosome. The chain is Large ribosomal subunit protein uL22 from Laribacter hongkongensis (strain HLHK9).